Consider the following 162-residue polypeptide: MKLDQAAKALFLSEFVGAFLLSMRYFFKPKPTLNYPHEKNPQSPRYRGEHALRRYPNGEERCIACKLCEAICPAQAITIEAGPRRNDGTRRTTRYDIDMVKCIYCGFCQEACPVDAIVEGPNAEFSVETREELYYDKDRLLENGARWEREIARNIALDAPYR.

2 4Fe-4S ferredoxin-type domains span residues 52-82 (LRRY…IEAG) and 93-122 (TRYD…EGPN). The [4Fe-4S] cluster site is built by Cys62, Cys65, Cys68, Cys72, Cys102, Cys105, Cys108, and Cys112.

It belongs to the complex I 23 kDa subunit family. As to quaternary structure, NDH-1 is composed of 14 different subunits. Subunits NuoA, H, J, K, L, M, N constitute the membrane sector of the complex. [4Fe-4S] cluster is required as a cofactor.

The protein localises to the cell inner membrane. The enzyme catalyses a quinone + NADH + 5 H(+)(in) = a quinol + NAD(+) + 4 H(+)(out). Functionally, NDH-1 shuttles electrons from NADH, via FMN and iron-sulfur (Fe-S) centers, to quinones in the respiratory chain. The immediate electron acceptor for the enzyme in this species is believed to be ubiquinone. Couples the redox reaction to proton translocation (for every two electrons transferred, four hydrogen ions are translocated across the cytoplasmic membrane), and thus conserves the redox energy in a proton gradient. The polypeptide is NADH-quinone oxidoreductase subunit I (Methylocella silvestris (strain DSM 15510 / CIP 108128 / LMG 27833 / NCIMB 13906 / BL2)).